The following is a 608-amino-acid chain: Thiol:disulfide interchange protein DsbD (608 aa).

Positions 1–22 (MKNLLSLCFLMLAAFTLNPAAA) are cleaved as a signal peptide. A disulfide bridge links C135 with C141. The span at 161 to 173 (SAPSSDAAQQTNE) shows a compositional bias: polar residues. The disordered stretch occupies residues 161 to 180 (SAPSSDAAQQTNEGEVKKSE). 8 helical membrane-spanning segments follow: residues 194-214 (LLTLIAFFVGGLLLSFTPCVF), 241-261 (FFYVQGMAITYTLLGVVVAMA), 273-293 (IVLIGLSILFIFLALSMFGVF), 314-334 (GGSITGVLMMGVISGLVASPC), 352-372 (VVLGASALYALSLGMGLPLLI), 387-407 (WMNIIKNIFGLLLLAVPVFLL), 414-434 (VASQALWALLILVSASYFYVA), and 456-476 (SLVIFLMLFFGANLAYQLIYP). An intrachain disulfide couples C212 to C334. In terms of domain architecture, Thioredoxin spans 469–608 (LAYQLIYPSS…FSAHVKSIFK (140 aa)). The cysteines at positions 522 and 525 are disulfide-linked.

Belongs to the thioredoxin family. DsbD subfamily.

The protein localises to the cell inner membrane. The enzyme catalyses [protein]-dithiol + NAD(+) = [protein]-disulfide + NADH + H(+). It carries out the reaction [protein]-dithiol + NADP(+) = [protein]-disulfide + NADPH + H(+). Required to facilitate the formation of correct disulfide bonds in some periplasmic proteins and for the assembly of the periplasmic c-type cytochromes. Acts by transferring electrons from cytoplasmic thioredoxin to the periplasm. This transfer involves a cascade of disulfide bond formation and reduction steps. In Colwellia psychrerythraea (strain 34H / ATCC BAA-681) (Vibrio psychroerythus), this protein is Thiol:disulfide interchange protein DsbD.